A 571-amino-acid chain; its full sequence is Carboxylesterase 3 (571 aa).

The first 26 residues, 1–26 (MERAVRVESGVLVGVVCLLLACPATA), serve as a signal peptide directing secretion. Cysteine 97 and cysteine 124 form a disulfide bridge. Asparagine 105 is a glycosylation site (N-linked (GlcNAc...) asparagine). Catalysis depends on serine 229, which acts as the Acyl-ester intermediate. Residues cysteine 281 and cysteine 292 are joined by a disulfide bond. Catalysis depends on charge relay system residues glutamate 347 and histidine 460. A Prevents secretion from ER motif is present at residues 568–571 (QEDL).

Belongs to the type-B carboxylesterase/lipase family. N-glycosylated. Expressed in liver, colon and small intestine.

The protein resides in the endoplasmic reticulum lumen. The enzyme catalyses a carboxylic ester + H2O = an alcohol + a carboxylate + H(+). Involved in the detoxification of xenobiotics and in the activation of ester and amide prodrugs. Shows low catalytic efficiency for hydrolysis of CPT-11 (7-ethyl-10-[4-(1-piperidino)-1-piperidino]-carbonyloxycamptothecin), a prodrug for camptothecin used in cancer therapeutics. The polypeptide is Carboxylesterase 3 (CES3) (Homo sapiens (Human)).